A 463-amino-acid chain; its full sequence is Mitochondrial dynamics protein MIEF1 (463 aa).

Residues Met-1–Val-23 lie on the Mitochondrial intermembrane side of the membrane. Residues Leu-24–Val-46 form a helical membrane-spanning segment. Residues Lys-47 to Thr-463 lie on the Cytoplasmic side of the membrane. Residues Met-49–Gln-195 form a dimerization region. 4 positions are modified to phosphoserine: Ser-55, Ser-59, Ser-79, and Ser-94. The segment at Pro-57 to Met-77 is disordered. A disordered region spans residues Gln-96–Gln-123. Low complexity predominate over residues Thr-100 to Phe-110. Residues Ala-160–Arg-169 form an important for interaction with DNM1L region. Residues Ser-187, Ser-189, and His-201 each coordinate ADP. The segment at Arg-234–Pro-242 is important for interaction with DNM1L. ADP contacts are provided by Ser-340, Arg-342, and Lys-368.

This sequence belongs to the SMCR7 family. Homodimer. Interacts with DNM1L. In terms of tissue distribution, expression is relatively high in heart, skeletal muscle, pancreas and kidney.

Its subcellular location is the mitochondrion outer membrane. Its function is as follows. Mitochondrial outer membrane protein which regulates mitochondrial fission/fusion dynamics. Promotes the recruitment and association of the fission mediator dynamin-related protein 1 (DNM1L) to the mitochondrial surface independently of the mitochondrial fission FIS1 and MFF proteins. Regulates DNM1L GTPase activity and DNM1L oligomerization. Binds ADP and can also bind GDP, although with lower affinity. Does not bind CDP, UDP, ATP, AMP or GTP. Inhibits DNM1L GTPase activity in the absence of bound ADP. Requires ADP to stimulate DNM1L GTPase activity and the assembly of DNM1L into long, oligomeric tubules with a spiral pattern, as opposed to the ring-like DNM1L oligomers observed in the absence of bound ADP. Does not require ADP for its function in recruiting DNM1L. The polypeptide is Mitochondrial dynamics protein MIEF1 (Homo sapiens (Human)).